Reading from the N-terminus, the 117-residue chain is Large ribosomal subunit protein bL19 (117 aa).

Belongs to the bacterial ribosomal protein bL19 family.

This protein is located at the 30S-50S ribosomal subunit interface and may play a role in the structure and function of the aminoacyl-tRNA binding site. This is Large ribosomal subunit protein bL19 from Alkaliphilus metalliredigens (strain QYMF).